The primary structure comprises 263 residues: Tryptophan synthase alpha chain (263 aa).

Active-site proton acceptor residues include Glu47 and Asp58.

It belongs to the TrpA family. In terms of assembly, tetramer of two alpha and two beta chains.

It is found in the plastid. The protein localises to the chloroplast. It catalyses the reaction (1S,2R)-1-C-(indol-3-yl)glycerol 3-phosphate + L-serine = D-glyceraldehyde 3-phosphate + L-tryptophan + H2O. Its pathway is amino-acid biosynthesis; L-tryptophan biosynthesis; L-tryptophan from chorismate: step 5/5. Functionally, the alpha subunit is responsible for the aldol cleavage of indoleglycerol phosphate to indole and glyceraldehyde 3-phosphate. This is Tryptophan synthase alpha chain from Pyropia yezoensis (Susabi-nori).